The primary structure comprises 307 residues: NAD kinase (307 aa).

The Proton acceptor role is filled by Asp-80. NAD(+) contacts are provided by residues 80–81, His-85, 154–155, His-165, His-182, Asp-184, 195–200, and Gln-254; these read DG, ND, and TAYALS.

It belongs to the NAD kinase family. A divalent metal cation is required as a cofactor.

The protein resides in the cytoplasm. It carries out the reaction NAD(+) + ATP = ADP + NADP(+) + H(+). Involved in the regulation of the intracellular balance of NAD and NADP, and is a key enzyme in the biosynthesis of NADP. Catalyzes specifically the phosphorylation on 2'-hydroxyl of the adenosine moiety of NAD to yield NADP. The chain is NAD kinase from Acinetobacter baylyi (strain ATCC 33305 / BD413 / ADP1).